The primary structure comprises 222 residues: Noggin (222 aa).

The signal sequence occupies residues 1–19 (MDHSQCLVTIYALMVFLGL). N61 carries N-linked (GlcNAc...) asparagine glycosylation. 4 disulfide bridges follow: C145/C182, C168/C218, C174/C220, and C197/C205.

It belongs to the noggin family. In terms of assembly, homodimer.

It localises to the secreted. In terms of biological role, patterns the embryo by interrupting bone morphogenetic proteins (BMP) signaling. Binds BMP-4 and BMP-2 with high affinity. Can abolish BMP-4 activity by blocking binding to cognate cell-surface receptors. Capable of inducing dorsal development in embryos. Causes dorsal mesodermal differentiation of animal cap ectoderm when coexpressed with xWNT-8 and nuclear, sequence-specific DNA-binding protein xBRA. None of these molecules causes dorsal mesoderm formation when expressed alone. In Xenopus laevis (African clawed frog), this protein is Noggin (nog).